Consider the following 352-residue polypeptide: MAAKLLFFLLFLVSALSVALAGFEEDNPIRSVTQRPDSIEPAILGVLGSCRHAFHFARFARRYGKSYGSEEEIKKRFGIFVENLAFIRSTNRKDLSYTLGINQFADLTWEEFRTNRLGAAQNCSATAHGNHRFVDGVLPVTRDWREQGIVSPVKDQGSCGSWTFSTTGALEAAYTQLTGSTLSEQQLVDCASAFNNFGCGGLPSQAFEYVKYNGGIDTEQTYPYLGVMGICNFKQENVGVKVIDSINITLGAEDELKHAVGLVRPVSVAFEVVKGFNLYKKGVYSSDTCGRDPMDVNHAVLAVGYGVEDGIPYWLIKNSWGTNWGDNGYFKMELGKNMCGVATCASYPIVAV.

The N-linked (GlcNAc...) asparagine glycan is linked to N122. 2 disulfide bridges follow: C159–C199 and C190–C231. An N-linked (GlcNAc...) asparagine glycan is attached at N247. A disulfide bond links C289 and C339. Active-site residues include H298 and N318.

This sequence belongs to the peptidase C1 family. Forms homodimers, homotrimers and homotetramers. Mainly expressed in pods, but also present in stems, roots, leaves and embryos (at protein level).

Its subcellular location is the plastid. The protein resides in the chloroplast. It carries out the reaction (E)-4-coumarate + H2O = 4-hydroxybenzaldehyde + acetate. It functions in the pathway aromatic compound metabolism; phenylpropanoid biosynthesis. Its activity is regulated as follows. Inhibited by ascorbate. In terms of biological role, involved in the biosynthesis of vanillin (4-hydroxy-3-methoxy-benzaldehyde) and derivative natural products, key components of vanilla pods flavor. Catalyzes the conversion of (E)-4-coumarate to 4-hydroxybenzaldehyde, a vanillin precursor. Mediates the conversion of ferulic acid to 3-methoxy-4-hydroxybenzaldehyde with a very low efficiency. Cannot use cinnamic, caffeic, sinapic and o-coumaric acids as substrates. The chain is 4-hydroxybenzaldehyde synthase, chloroplastic from Vanilla planifolia (Vanilla).